A 309-amino-acid chain; its full sequence is MEDEDCYEDWMSKMPSHMWDIPLWNLAIPGSHDSMTYCLDKQSSVSNSTPRVVQVLDKYFPCIVRPCIMKWATTQEGAISNQLDLGIRFLDLRIAHKIKDPDEVFYFAHGVYSLLTVKEALTEVVRWLDQHIKEVVIIALSNFEGMNLDQHKDLIQFLIATFNKKICPKSVTPSLQECWNHSYQVILSYDDESSTGYVELWPQCPYWWANKSDPNLVISYLEDQKNEGRPSQFFAAGLNLTEDARYVLCHPCQSLQSMTRRSYSLLMKWVKQQRPGSGQACLNIICADFVGIFGSESTQLVIGLNQIEA.

Positions 17–193 (HMWDIPLWNL…QVILSYDDES (177 aa)) constitute a PI-PLC X-box domain.

The sequence is that of PI-PLC X domain-containing protein 1 (plcxd1) from Danio rerio (Zebrafish).